The chain runs to 595 residues: Epsin-2 (595 aa).

The a 1,2-diacyl-sn-glycero-3-phospho-(1D-myo-inositol-4,5-bisphosphate) site is built by arginine 8, lysine 11, arginine 25, asparagine 30, arginine 63, and histidine 73. The ENTH domain occupies 12 to 144 (NIVNNYSEAE…KDEERLKVER (133 aa)). The segment covering 164-183 (NQITFGRGSSQPNLSTSYSE) has biased composition (polar residues). Disordered regions lie at residues 164–254 (NQIT…RLRR), 267–289 (SRRD…PGSH), 305–396 (SGPV…KPSS), and 423–469 (TSKK…PESF). An Omega-N-methylarginine modification is found at arginine 170. Phosphoserine is present on residues serine 173, serine 192, and serine 195. 2 stretches are compositionally biased toward polar residues: residues 197-216 (HGST…PQTS) and 235-245 (EQSSESVQTAR). UIM domains follow at residues 218–237 (EEEL…AEQS) and 255–274 (GDDL…TVKV). Over residues 306-337 (GPVTQKTEPWSAGASANQTNPWGGTVAPSNIT) the composition is skewed to polar residues. 4 tandem repeats follow at residues 313–315 (EPW), 325–327 (NPW), 338–340 (DPW), and 352–354 (DPW). The interval 313 to 389 (EPWSAGASAN…SNAGKTTDAW (77 aa)) is 6 X 3 AA repeats of [DE]-P-W. Polar residues predominate over residues 358 to 367 (TTASTQSVPK). The stretch at 370 to 372 (DPW) is repeat 5. Polar residues predominate over residues 374–384 (ASQQPASNAGK). Repeat unit 6 spans residues 387 to 389 (DAW). Serine 443 carries the phosphoserine modification. Residues 449–460 (SQSLTSASSKPS) show a composition bias toward low complexity. Threonine 465 carries the post-translational modification Phosphothreonine. Tandem repeats lie at residues 494 to 496 (NPF) and 508 to 510 (NPF). The segment at 494-593 (NPFLAPGAAA…AQSTGTTNPF (100 aa)) is 3 X 3 AA repeats of N-P-F. Position 526 is a phosphoserine (serine 526). Repeat unit 3 spans residues 591 to 593 (NPF).

Belongs to the epsin family. Binds EPS15, AP-2 and clathrin. Interacts with UBQLN2. Interacts with ITSN1. Ubiquitinated.

The protein resides in the cytoplasm. In terms of biological role, plays a role in the formation of clathrin-coated invaginations and endocytosis. In Mus musculus (Mouse), this protein is Epsin-2 (Epn2).